The chain runs to 321 residues: Glucokinase (321 aa).

Position 8-13 (8-13 (GDVGGT)) interacts with ATP.

This sequence belongs to the bacterial glucokinase family.

Its subcellular location is the cytoplasm. It carries out the reaction D-glucose + ATP = D-glucose 6-phosphate + ADP + H(+). The chain is Glucokinase from Klebsiella pneumoniae subsp. pneumoniae (strain ATCC 700721 / MGH 78578).